Consider the following 65-residue polypeptide: Neurotoxin BmK-M3 (65 aa).

In terms of domain architecture, LCN-type CS-alpha/beta spans 2 to 64; sequence RDAYIAKPEN…VPIRVWGKCH (63 aa). 4 disulfides stabilise this stretch: Cys12-Cys63, Cys16-Cys36, Cys22-Cys46, and Cys26-Cys48.

It belongs to the long (4 C-C) scorpion toxin superfamily. Sodium channel inhibitor family. Alpha subfamily. As to expression, expressed by the venom gland.

The protein resides in the secreted. Its function is as follows. Binds to sodium channels (Nav) and inhibits the inactivation of the activated channels, thereby blocking neuronal transmission. The sequence is that of Neurotoxin BmK-M3 from Olivierus martensii (Manchurian scorpion).